The following is a 206-amino-acid chain: Ras-related protein Rab-18 (206 aa).

N-acetylmethionine is present on Met1. Positions 17, 20, 21, 22, 23, 34, 35, 40, 66, 123, and 125 each coordinate GTP. Position 22 (Ser22) interacts with Mg(2+). 2 short sequence motifs (switch) span residues 31 to 45 (DTFDPELAATIGVDF) and 63 to 80 (DTAGQERFRTLTPSYYRG). Thr40 lines the Mg(2+) pocket. Phosphoserine is present on Ser144. Ala152 is a binding site for GTP. Cys199 carries the S-palmitoyl cysteine lipid modification. Cys203 carries the cysteine methyl ester modification. Cys203 carries the S-geranylgeranyl cysteine lipid modification. Residues 204–206 (SVL) constitute a propeptide, removed in mature form.

The protein belongs to the small GTPase superfamily. Rab family. In terms of assembly, interacts (in GTP-bound form) with ZFYVE1. Interacts with ZW10 and this interaction is enhanced in the presence of ZFYVE1. Interacts with BSCL2. Mg(2+) serves as cofactor.

Its subcellular location is the endoplasmic reticulum membrane. The protein localises to the golgi apparatus. It localises to the cis-Golgi network membrane. It is found in the lipid droplet. The protein resides in the apical cell membrane. It carries out the reaction GTP + H2O = GDP + phosphate + H(+). Regulated by guanine nucleotide exchange factors (GEFs) which promote the exchange of bound GDP for free GTP. Regulated by GTPase activating proteins (GAPs) which increase the GTP hydrolysis activity at the ER membrane. Inhibited by GDP dissociation inhibitors (GDIs) which prevent Rab-GDP dissociation. The small GTPases Rab are key regulators of intracellular membrane trafficking, from the formation of transport vesicles to their fusion with membranes. Rabs cycle between an inactive GDP-bound form and an active GTP-bound form that is able to recruit to membranes different sets of downstream effectors directly responsible for vesicle formation, movement, tethering and fusion. RAB18 is required for the localization of ZFYVE1 to lipid droplets and for its function in mediating the formation of endoplasmic reticulum-lipid droplets (ER-LD) contacts. Also required for maintaining endoplasmic reticulum structure. Plays a role in apical endocytosis/recycling. Plays a key role in eye and brain development and neurodegeneration. The sequence is that of Ras-related protein Rab-18 from Rattus norvegicus (Rat).